Here is a 173-residue protein sequence, read N- to C-terminus: dCTP deaminase, dUMP-forming (173 aa).

DCTP-binding positions include 93–98, aspartate 111, 119–121, glutamine 138, and tyrosine 151; these read RSSIGR and TLE. Glutamate 121 acts as the Proton donor/acceptor in catalysis.

Belongs to the dCTP deaminase family. In terms of assembly, homotrimer.

The enzyme catalyses dCTP + 2 H2O = dUMP + NH4(+) + diphosphate. It participates in pyrimidine metabolism; dUMP biosynthesis; dUMP from dCTP: step 1/1. Bifunctional enzyme that catalyzes both the deamination of dCTP to dUTP and the hydrolysis of dUTP to dUMP without releasing the toxic dUTP intermediate. This chain is dCTP deaminase, dUMP-forming, found in Clostridium acetobutylicum (strain ATCC 824 / DSM 792 / JCM 1419 / IAM 19013 / LMG 5710 / NBRC 13948 / NRRL B-527 / VKM B-1787 / 2291 / W).